A 259-amino-acid polypeptide reads, in one-letter code: Chloroplastic import inner membrane translocase subunit HP30-2 (259 aa).

4 helical membrane-spanning segments follow: residues 55–75, 108–124, 135–155, and 158–178; these read AVVT…MGTL, NFAA…CVMK, AVVA…GLQG, and MNAI…FKLG.

It belongs to the Tim17/Tim22/Tim23 family. As to quaternary structure, probable component of a protein-conducting channel made of HP30-1, HP30-2 and HP20 that mediates the import of transit sequence-less proteins into the chloroplastic inner membrane. Interacts with CEQORH.

It localises to the mitochondrion membrane. The protein resides in the plastid. It is found in the chloroplast inner membrane. Its function is as follows. Together with HP30-1 and HP20, triggers the import and insertion of transit sequence-less multi-pass transmembrane proteins (e.g. CEQORH) into the chloroplastic inner membrane. In Arabidopsis thaliana (Mouse-ear cress), this protein is Chloroplastic import inner membrane translocase subunit HP30-2.